A 490-amino-acid chain; its full sequence is Probable cytosol aminopeptidase (490 aa).

2 residues coordinate Mn(2+): Lys262 and Asp267. The active site involves Lys274. The Mn(2+) site is built by Asp285, Asp344, and Glu346. Residue Arg348 is part of the active site.

It belongs to the peptidase M17 family. Mn(2+) serves as cofactor.

It localises to the cytoplasm. It carries out the reaction Release of an N-terminal amino acid, Xaa-|-Yaa-, in which Xaa is preferably Leu, but may be other amino acids including Pro although not Arg or Lys, and Yaa may be Pro. Amino acid amides and methyl esters are also readily hydrolyzed, but rates on arylamides are exceedingly low.. It catalyses the reaction Release of an N-terminal amino acid, preferentially leucine, but not glutamic or aspartic acids.. Presumably involved in the processing and regular turnover of intracellular proteins. Catalyzes the removal of unsubstituted N-terminal amino acids from various peptides. The chain is Probable cytosol aminopeptidase from Xanthomonas axonopodis pv. citri (strain 306).